The chain runs to 1156 residues: Mastermind-like protein 2 (1156 aa).

The segment at 81 to 165 is disordered; that stretch reads QHGQGARKAG…PPASTPGDQR (85 aa). Low complexity predominate over residues 113 to 122; it reads PAASQAAATA. A compositionally biased stretch (polar residues) spans 153–165; that stretch reads EQQPPASTPGDQR. Position 175 is a phosphoserine (serine 175). 7 disordered regions span residues 340 to 359, 369 to 506, 531 to 630, 658 to 680, 705 to 743, 784 to 820, and 1059 to 1100; these read FNID…SLPM, SPGL…GSGQ, QQKP…QQQQ, QQQQ…QPLL, YQVS…GYMN, IAPQ…YSGG, and LPNL…FQGT. Polar residues-rich tracts occupy residues 344–354, 371–380, 393–419, and 428–437; these read LGQQSQRSTPR, GLTQGPSGSP, MANS…TGSG, and QEVSHAQQLK. The segment covering 440 to 470 has biased composition (low complexity); the sequence is AANRQQHARMQQHQQQHQPTNWSALPSSAGP. 3 stretches are compositionally biased toward polar residues: residues 484-496, 532-543, and 563-587; these read SFGQ…QSSP, QKPQDLSRSFIN, and NSDQ…LHYT. The span at 588–630 shows a compositional bias: low complexity; it reads QQQQQQQQQQQQQQQQQQQQQQQQQQQQQQQQQQSSISAQQQQ. Composition is skewed to low complexity over residues 706–725 and 733–743; these read QVSQ…NTGP and SNPNTGSGYMN. Over residues 807-820 the composition is skewed to polar residues; sequence NVGNMQPTAQYSGG.

The protein belongs to the mastermind family. Interacts through its N-terminal region with the ankyrin repeat region of the Notch proteins NOTCH1, NOTCH2, NOTCH3 and NOTCH4. Forms a DNA-binding complex with Notch proteins and RBPSUH/RBP-J kappa. As to expression, widely expressed with high levels detected in placenta, salivary gland and skeletal muscle.

The protein localises to the nucleus speckle. In terms of biological role, acts as a transcriptional coactivator for NOTCH proteins. Has been shown to amplify NOTCH-induced transcription of HES1. Potentiates activation by NOTCH3 and NOTCH4 more efficiently than MAML1 or MAML3. In Homo sapiens (Human), this protein is Mastermind-like protein 2 (MAML2).